Reading from the N-terminus, the 194-residue chain is Imidazoleglycerol-phosphate dehydratase (194 aa).

This sequence belongs to the imidazoleglycerol-phosphate dehydratase family.

It is found in the cytoplasm. It carries out the reaction D-erythro-1-(imidazol-4-yl)glycerol 3-phosphate = 3-(imidazol-4-yl)-2-oxopropyl phosphate + H2O. It participates in amino-acid biosynthesis; L-histidine biosynthesis; L-histidine from 5-phospho-alpha-D-ribose 1-diphosphate: step 6/9. The sequence is that of Imidazoleglycerol-phosphate dehydratase from Bacillus thuringiensis (strain Al Hakam).